Reading from the N-terminus, the 120-residue chain is NAD(P)H-quinone oxidoreductase subunit 3, chloroplastic (120 aa).

A run of 3 helical transmembrane segments spans residues V11–I31, F65–V85, and L89–V109.

This sequence belongs to the complex I subunit 3 family. NDH is composed of at least 16 different subunits, 5 of which are encoded in the nucleus.

The protein localises to the plastid. It localises to the chloroplast thylakoid membrane. The catalysed reaction is a plastoquinone + NADH + (n+1) H(+)(in) = a plastoquinol + NAD(+) + n H(+)(out). It catalyses the reaction a plastoquinone + NADPH + (n+1) H(+)(in) = a plastoquinol + NADP(+) + n H(+)(out). Functionally, NDH shuttles electrons from NAD(P)H:plastoquinone, via FMN and iron-sulfur (Fe-S) centers, to quinones in the photosynthetic chain and possibly in a chloroplast respiratory chain. The immediate electron acceptor for the enzyme in this species is believed to be plastoquinone. Couples the redox reaction to proton translocation, and thus conserves the redox energy in a proton gradient. The protein is NAD(P)H-quinone oxidoreductase subunit 3, chloroplastic of Mesostigma viride (Green alga).